We begin with the raw amino-acid sequence, 571 residues long: UvrABC system protein C (571 aa).

Residues 15-93 form the GIY-YIG domain; that stretch reads TSPGVYLWKD…VDRFNPEFNI (79 aa). The 36-residue stretch at 184-219 folds into the UVR domain; it reads NNYLNELTNKMHTAANNMQFELALFLRDGLTYLKKL.

It belongs to the UvrC family. As to quaternary structure, interacts with UvrB in an incision complex.

The protein resides in the cytoplasm. In terms of biological role, the UvrABC repair system catalyzes the recognition and processing of DNA lesions. UvrC both incises the 5' and 3' sides of the lesion. The N-terminal half is responsible for the 3' incision and the C-terminal half is responsible for the 5' incision. The polypeptide is UvrABC system protein C (Mycoplasmopsis agalactiae (strain NCTC 10123 / CIP 59.7 / PG2) (Mycoplasma agalactiae)).